Consider the following 229-residue polypeptide: Large ribosomal subunit protein uL1 (229 aa).

The protein belongs to the universal ribosomal protein uL1 family. Part of the 50S ribosomal subunit.

Its function is as follows. Binds directly to 23S rRNA. The L1 stalk is quite mobile in the ribosome, and is involved in E site tRNA release. Functionally, protein L1 is also a translational repressor protein, it controls the translation of the L11 operon by binding to its mRNA. In Haemophilus influenzae (strain 86-028NP), this protein is Large ribosomal subunit protein uL1.